The sequence spans 195 residues: Protein GrpE (195 aa).

Belongs to the GrpE family. In terms of assembly, homodimer.

The protein resides in the cytoplasm. Its function is as follows. Participates actively in the response to hyperosmotic and heat shock by preventing the aggregation of stress-denatured proteins, in association with DnaK and GrpE. It is the nucleotide exchange factor for DnaK and may function as a thermosensor. Unfolded proteins bind initially to DnaJ; upon interaction with the DnaJ-bound protein, DnaK hydrolyzes its bound ATP, resulting in the formation of a stable complex. GrpE releases ADP from DnaK; ATP binding to DnaK triggers the release of the substrate protein, thus completing the reaction cycle. Several rounds of ATP-dependent interactions between DnaJ, DnaK and GrpE are required for fully efficient folding. In Francisella tularensis subsp. tularensis (strain FSC 198), this protein is Protein GrpE.